A 145-amino-acid chain; its full sequence is MRQTFMANESNIDRKWYVIDAEGKTMGRLSSEVASILRGKHKPTFTPHVDCGDHVILINAEKIYLSGNKAEDKIYYRHSNHPGGIKSISAGELREKNPVRLMETSIKGMLPKGSLGDKMFKKLHVYAGAEHPHTAQQPENYELRG.

Belongs to the universal ribosomal protein uL13 family. As to quaternary structure, part of the 50S ribosomal subunit.

Its function is as follows. This protein is one of the early assembly proteins of the 50S ribosomal subunit, although it is not seen to bind rRNA by itself. It is important during the early stages of 50S assembly. The chain is Large ribosomal subunit protein uL13 from Macrococcus caseolyticus (strain JCSC5402) (Macrococcoides caseolyticum).